We begin with the raw amino-acid sequence, 377 residues long: Presenilin-associated rhomboid-like protein, mitochondrial (377 aa).

Residues 1–50 (MALQGWVQRGWRCGPAWAPPLGGGYRELSATQAPRLLGRRFNLFVQQKCG) constitute a mitochondrion transit peptide. Residues 51 to 99 (FRKAPRKVEPRRSDTGSSGEAYKRSALIPPLEETVFYPSPYPIRTLVKP) are Mitochondrial matrix-facing. Ser-63 and Ser-68 each carry phosphoserine. A helical membrane pass occupies residues 100-119 (FFFTIGFTGCAFGSAAIWQY). Residues 120-165 (ESLKSRVQSYFDGIKADWLDSIRPQKEGNLRKEINKWWNSLSDGQR) are Mitochondrial intermembrane-facing. A helical membrane pass occupies residues 166-185 (TVTGIIAANALVFCLWRVPS). Residues 186 to 205 (LQRTMIRYFTSNPASKVLCS) lie on the Mitochondrial matrix side of the membrane. The chain crosses the membrane as a helical span at residues 206-228 (PMLLSTFSHFSLFHMAANMYVLW). Residues 229–242 (SFSSSIVNILGQEQ) lie on the Mitochondrial intermembrane side of the membrane. A helical membrane pass occupies residues 243 to 260 (FVAVYLSAGVISNFVSYV). At 261-270 (CKVATGRYGP) the chain is on the mitochondrial matrix side. Residues 271–287 (SLGASGAIMTVLAAVCT) traverse the membrane as a helical segment. Ser-275 functions as the Nucleophile in the catalytic mechanism. Topologically, residues 288 to 293 (KIPEGR) are mitochondrial intermembrane. A helical transmembrane segment spans residues 294 to 316 (LAIIFLPVFTFTAGNALKAIIAM). Residues 317–330 (DTAGMILGWKFFDH) are Mitochondrial matrix-facing. A helical membrane pass occupies residues 331–352 (AAHLGGALFGIWYITYGHELIW). His-333 is an active-site residue. The Mitochondrial intermembrane segment spans residues 353 to 377 (KNREPLVKIWHEIRTNGPKKGGGSK).

It belongs to the peptidase S54 family. In terms of assembly, interacts with PSEN1 and PSEN2. Binds OPA1. P-beta is proteolytically processed (beta-cleavage) in a PARL-dependent manner.

The protein resides in the mitochondrion inner membrane. It localises to the nucleus. It carries out the reaction Cleaves type-1 transmembrane domains using a catalytic dyad composed of serine and histidine that are contributed by different transmembrane domains.. Functionally, required for the control of apoptosis during postnatal growth. Essential for proteolytic processing of an antiapoptotic form of OPA1 which prevents the release of mitochondrial cytochrome c in response to intrinsic apoptotic signals. Required for the maturation of PINK1 into its 52kDa mature form after its cleavage by mitochondrial-processing peptidase (MPP). Promotes cleavage of serine/threonine-protein phosphatase PGAM5 in damaged mitochondria in response to loss of mitochondrial membrane potential. Mediates differential cleavage of PINK1 and PGAM5 depending on the health status of mitochondria, disassociating from PINK1 and associating with PGAM5 in response to mitochondrial membrane potential loss. Required for processing of CLPB into a form with higher protein disaggregase activity by removing an autoinhibitory N-terminal peptide. Promotes processing of DIABLO/SMAC in the mitochondrion which is required for DIABLO apoptotic activity. Also required for cleavage of STARD7 and TTC19. Promotes changes in mitochondria morphology regulated by phosphorylation of P-beta domain. This is Presenilin-associated rhomboid-like protein, mitochondrial (Parl) from Mus musculus (Mouse).